The chain runs to 212 residues: Ribosomal RNA large subunit methyltransferase E (212 aa).

Basic residues predominate over residues 1-10 (MATCRRRRRG). The segment at 1-24 (MATCRRRRRGCNSQARRSRHESDP) is disordered. Gly-66, Trp-68, Asp-86, Asp-102, and Asp-127 together coordinate S-adenosyl-L-methionine. Lys-167 (proton acceptor) is an active-site residue.

It belongs to the class I-like SAM-binding methyltransferase superfamily. RNA methyltransferase RlmE family.

It is found in the cytoplasm. It catalyses the reaction uridine(2552) in 23S rRNA + S-adenosyl-L-methionine = 2'-O-methyluridine(2552) in 23S rRNA + S-adenosyl-L-homocysteine + H(+). Specifically methylates the uridine in position 2552 of 23S rRNA at the 2'-O position of the ribose in the fully assembled 50S ribosomal subunit. The chain is Ribosomal RNA large subunit methyltransferase E from Halorhodospira halophila (strain DSM 244 / SL1) (Ectothiorhodospira halophila (strain DSM 244 / SL1)).